The primary structure comprises 383 residues: Dimethylsulfoniopropionate lyase 3 (383 aa).

The protein belongs to the aspartate/glutamate racemases family. ALMA1 subfamily. In terms of assembly, homotetramer.

The catalysed reaction is S,S-dimethyl-beta-propiothetin = acrylate + dimethyl sulfide + H(+). Its function is as follows. Mediates cleavage of dimethylsulfoniopropionate (DMSP) into dimethyl sulfide (DMS) and acrylate. DMS is the principal form by which sulfur is transported from oceans to the atmosphere and is a key component of the ocean sulfur cycle. The sequence is that of Dimethylsulfoniopropionate lyase 3 from Emiliania huxleyi (strain CCMP1516).